Reading from the N-terminus, the 194-residue chain is MSFALGLTGSIGMGKSTTAAMFRDLDVPVWDADATVHKLYARGGAAVAPIDALVPGAMKDGAIDRAVLRAAIADDASLLKQIEAIVHPLVAKDRAMFRDIHSTAPLIILDIPLLFETGGDAACDATLVVTTSPEEQRRRVLARGTSEDTLHDLLSRQMPDAEKRARATYVIETDTLDGTRQDVAHLVSKLTEGT.

In terms of domain architecture, DPCK spans 4-194 (ALGLTGSIGM…HLVSKLTEGT (191 aa)). Residue 12–17 (GMGKST) participates in ATP binding.

Belongs to the CoaE family.

It is found in the cytoplasm. The catalysed reaction is 3'-dephospho-CoA + ATP = ADP + CoA + H(+). The protein operates within cofactor biosynthesis; coenzyme A biosynthesis; CoA from (R)-pantothenate: step 5/5. Its function is as follows. Catalyzes the phosphorylation of the 3'-hydroxyl group of dephosphocoenzyme A to form coenzyme A. The polypeptide is Dephospho-CoA kinase (Jannaschia sp. (strain CCS1)).